Consider the following 568-residue polypeptide: Urease subunit alpha (568 aa).

A Urease domain is found at 130–568; it reads GGIDTHIHFI…LPMAQRYFLF (439 aa). Residues His-135, His-137, and Lys-218 each coordinate Ni(2+). Lys-218 is modified (N6-carboxylysine). His-220 is a binding site for substrate. Ni(2+) contacts are provided by His-247 and His-273. His-321 acts as the Proton donor in catalysis. Asp-361 provides a ligand contact to Ni(2+).

It belongs to the metallo-dependent hydrolases superfamily. Urease alpha subunit family. In terms of assembly, heterotrimer of UreA (gamma), UreB (beta) and UreC (alpha) subunits. Three heterotrimers associate to form the active enzyme. The cofactor is Ni cation. Carboxylation allows a single lysine to coordinate two nickel ions.

Its subcellular location is the cytoplasm. It catalyses the reaction urea + 2 H2O + H(+) = hydrogencarbonate + 2 NH4(+). It participates in nitrogen metabolism; urea degradation; CO(2) and NH(3) from urea (urease route): step 1/1. This Burkholderia pseudomallei (strain 668) protein is Urease subunit alpha.